The sequence spans 126 residues: UPF0538 protein C2orf76 homolog (126 aa).

The protein belongs to the UPF0538 family.

The protein is UPF0538 protein C2orf76 homolog of Mus musculus (Mouse).